The following is a 415-amino-acid chain: Teichoic acid D-alanyltransferase (415 aa).

Over 1 to 16 the chain is Extracellular; the sequence is MIDFLKQLPHLEPYGN. Residues 17–36 traverse the membrane as a helical segment; that stretch reads PFYFIYLGIALLPIFIGLFF. At 37–40 the chain is on the cytoplasmic side; sequence KKRF. A helical transmembrane segment spans residues 41 to 56; it reads AIYECLVSITFIVLAL. Over 57-60 the chain is Extracellular; the sequence is TGTH. Residues 61-87 traverse the membrane as a helical segment; sequence ASQILALLFYIVWQIIWVYSYKRYRSQ. The Cytoplasmic portion of the chain corresponds to 88-90; it reads RDN. Residues 91 to 115 form a helical membrane-spanning segment; sequence KWVFYLHSFLVVLPLILVKVEPTIN. Over 116-125 the chain is Extracellular; it reads GTQSLLNFLG. The helical transmembrane segment at 126-142 threads the bilayer; that stretch reads ISYLTFRAVGMIIEMRD. At 143–149 the chain is on the cytoplasmic side; sequence GVLKEFT. An intramembrane segment occupies 150–179; the sequence is LGEFLRFMLFMPTFTSGPIDRFKRFNEDYQ. Over 180-183 the chain is Cytoplasmic; that stretch reads SIPN. The helical transmembrane segment at 184–227 threads the bilayer; sequence RDELLNMLEQAVKYIMLGFLYKFVLAQIFGSMLLPPLKAQALSQ. The Extracellular portion of the chain corresponds to 228-232; that stretch reads GGIFN. The chain crosses the membrane as a helical span at residues 233–264; sequence LPTLGVMYVYGFDLFFDFAGYSMFALAVSNLM. At 265–274 the chain is on the cytoplasmic side; the sequence is GIKSPINFDK. An intramembrane segment occupies 275-311; sequence PFISRDMKEFWNRWHMSLSFWFRDFVFMRLVIVLMRN. Residues 312 to 316 are Cytoplasmic-facing; that stretch reads KVFKN. A helical membrane pass occupies residues 317 to 336; that stretch reads RNTTSNVAYIINMMVMGFWH. The active site involves H336. At 337–339 the chain is on the extracellular side; sequence GIT. The chain crosses the membrane as a helical span at residues 340 to 373; it reads WYYIAYGIFHGIGLVINDAWLRKKKTINKDRKKA. Residues 374-381 are Cytoplasmic-facing; that stretch reads GLKPLPEN. A helical membrane pass occupies residues 382–404; it reads KWTKALGIFITFNTVMLSFLIFS. At 405 to 415 the chain is on the extracellular side; it reads GFLNDLWFTKK.

The protein belongs to the membrane-bound acyltransferase family.

The protein localises to the cell membrane. The protein operates within cell wall biogenesis; lipoteichoic acid biosynthesis. Functionally, O-acyltransferase that catalyzes D-alanylation of both teichoic acid and lipoteichoic acid (LTA). D-alanylation of LTA plays an important role in modulating the properties of the cell wall in Gram-positive bacteria, influencing the net charge of the cell wall. Catalyzes D-alanylation from DltC carrier protein. This is Teichoic acid D-alanyltransferase from Streptococcus thermophilus (strain ATCC BAA-250 / LMG 18311).